The following is a 332-amino-acid chain: Glyoxylate reductase (332 aa).

NADP(+)-binding positions include 155-158 (MGRI) and 236-238 (TSR). Catalysis depends on residues R238 and E267. Residue H286 is the Proton donor of the active site. Position 286 to 288 (286 to 288 (HAA)) interacts with NADP(+).

This sequence belongs to the D-isomer specific 2-hydroxyacid dehydrogenase family. GyaR subfamily. In terms of assembly, homodimer.

The protein localises to the cytoplasm. The enzyme catalyses glycolate + NAD(+) = glyoxylate + NADH + H(+). The protein is Glyoxylate reductase of Korarchaeum cryptofilum (strain OPF8).